The following is a 338-amino-acid chain: GTPase Obg (338 aa).

One can recognise an Obg domain in the interval 1–159; it reads MKFLDKAIIH…RILRLELILI (159 aa). The OBG-type G domain occupies 160–333; that stretch reads AHVGTLGLPN…IVKKIYDFLK (174 aa). GTP contacts are provided by residues 166 to 173, 191 to 195, 213 to 216, 283 to 286, and 314 to 316; these read GLPNSGKS, FTTLK, DIPG, NKID, and SAI. Mg(2+) is bound by residues S173 and T193.

It belongs to the TRAFAC class OBG-HflX-like GTPase superfamily. OBG GTPase family. As to quaternary structure, monomer. Mg(2+) is required as a cofactor.

It localises to the cytoplasm. In terms of biological role, an essential GTPase which binds GTP, GDP and possibly (p)ppGpp with moderate affinity, with high nucleotide exchange rates and a fairly low GTP hydrolysis rate. Plays a role in control of the cell cycle, stress response, ribosome biogenesis and in those bacteria that undergo differentiation, in morphogenesis control. In Buchnera aphidicola subsp. Baizongia pistaciae (strain Bp), this protein is GTPase Obg.